A 227-amino-acid chain; its full sequence is MISSKASDYQQRIGYVFTDPSLLLQALRHRSAGTPHNERLEFLGDSVVNLLIAEALFQRWPRADEGALTRARSELVRETSLASIARTMQLGEQLILGPGELKSGGHRRDSILADAVEAVIAAIYLDADLATCRTVVLPWFETALTALPVGKPEKDPKTRLQEWLQARQWSLPVYELIFESGDPHTKHFRVSCTLGELKLRTEGEGSSRRLAEQDAASHAIDQLDSNK.

In terms of domain architecture, RNase III spans 6-128; the sequence is ASDYQQRIGY…VIAAIYLDAD (123 aa). Glutamate 41 contributes to the Mg(2+) binding site. The active site involves aspartate 45. Residues aspartate 114 and glutamate 117 each coordinate Mg(2+). The active site involves glutamate 117. Residues 155 to 225 form the DRBM domain; the sequence is DPKTRLQEWL…ASHAIDQLDS (71 aa). Residues 203 to 212 are compositionally biased toward basic and acidic residues; the sequence is GEGSSRRLAE. Positions 203 to 227 are disordered; it reads GEGSSRRLAEQDAASHAIDQLDSNK.

It belongs to the ribonuclease III family. Homodimer. The cofactor is Mg(2+).

Its subcellular location is the cytoplasm. It carries out the reaction Endonucleolytic cleavage to 5'-phosphomonoester.. In terms of biological role, digests double-stranded RNA. Involved in the processing of primary rRNA transcript to yield the immediate precursors to the large and small rRNAs (23S and 16S). Processes some mRNAs, and tRNAs when they are encoded in the rRNA operon. Processes pre-crRNA and tracrRNA of type II CRISPR loci if present in the organism. The chain is Ribonuclease 3 from Xylella fastidiosa (strain M23).